The chain runs to 362 residues: Heat-inducible transcription repressor HrcA (362 aa).

Belongs to the HrcA family.

Negative regulator of class I heat shock genes (grpE-dnaK-dnaJ and groELS operons). Prevents heat-shock induction of these operons. The polypeptide is Heat-inducible transcription repressor HrcA (Rhodopseudomonas palustris (strain BisB18)).